The sequence spans 527 residues: Cytochrome P450 monooxyhenase eriA (527 aa).

A helical membrane pass occupies residues 17–37; the sequence is LGVVDLSLLGVGAVIAFAWLF. N-linked (GlcNAc...) asparagine glycans are attached at residues Asn77, Asn274, and Asn297. Cys453 is a binding site for heme.

It belongs to the cytochrome P450 family. It depends on heme as a cofactor.

It localises to the membrane. It catalyses the reaction cyathadiol + reduced [NADPH--hemoprotein reductase] + O2 = cyathatriol + oxidized [NADPH--hemoprotein reductase] + H2O + H(+). The protein operates within secondary metabolite biosynthesis. In terms of biological role, cytochrome P450 monooxygenase; part of the gene cluster that mediates the biosynthesis of erinacines, cyathane-xylosides that show unique biological activities, including leishmanicidal activity, stimulating activity for nerve growth-factor synthesis, and agonistic activity toward the kappa opioid receptor. Within the pathway, eriA catalyzes C-11 hydroxylation in the presence of the short chain dehydrogenase/reductase (SDR) eriH, which leads to the production of cyathatriol. The first step of the erinacines biosynthesis pathway is catalyzed by the geranylgeranyl diphosphate (GGPP) synthase eriE via conversion of farnesyl pyrophosphate and isopentyl pyrophosphate into geranylgeranyl pyrophosphate (GGPP). GGPP is then substrate of the diterpene cyclase eriG for the production of cyatha-3,12-diene. The cytochrome P450 monooxygenase eriI then hydroxylates cyatha-3,12-diene at C-14 of the seven-membered ring to produce erinacol, which is further hydroxylated at C-15 by the cytochrome P450 monooxygenase eriC to yield cyathadiol. The cytochrome P450 monooxygenase eriA then catalyzes C-11 hydroxylation in the presence of the short chain dehydrogenase/reductase (SDR) eriH, which leads to the production of cyathatriol. The acetyltransferase eriL converts cyathatriol into 11-O-acetyl-cyathatriol. The SDR eriH catalyzes further oxidation of 11-O-acetyl-cyathatriol into 1-O-acetylcyathin A3. Finally, the glycosyl transferase eriJ tranfers xylose from UDP-xylose onto C-14 of 11-O-acetyl-cyathatriol to form eracine Q. EriJ is also able to convert 11-O-acetyl-cyathatriol to eracine Q2 by using UDP-D-glucose as cosubstrate, but at a lower rate. This Hericium erinaceus (Lion's mane mushroom) protein is Cytochrome P450 monooxyhenase eriA.